The following is an 835-amino-acid chain: Translation initiation factor IF-2 (835 aa).

The segment at 1 to 240 (MSDSDGKKTL…RKQERARQKA (240 aa)) is disordered. A compositionally biased stretch (gly residues) spans 50–59 (AGKGGAGGVA). The segment covering 86-152 (KAREAEEAAQ…AEAAKKRAAA (67 aa)) has biased composition (basic and acidic residues). Residues 153 to 169 (DKAAAAAPKSDAGVAPA) are compositionally biased toward low complexity. Residues 184 to 205 (RKAEREREERGRGAKGRNDGGR) show a composition bias toward basic and acidic residues. Positions 332–500 (PRPPVITIMG…AIALQAEILE (169 aa)) constitute a tr-type G domain. The G1 stretch occupies residues 341–348 (GHVDHGKT). Residue 341-348 (GHVDHGKT) participates in GTP binding. Residues 366–370 (GITQH) are G2. The tract at residues 388–391 (DTPG) is G3. GTP is bound by residues 388–392 (DTPGH) and 442–445 (NKID). A G4 region spans residues 442 to 445 (NKID). A G5 region spans residues 478–480 (SAH).

This sequence belongs to the TRAFAC class translation factor GTPase superfamily. Classic translation factor GTPase family. IF-2 subfamily.

The protein localises to the cytoplasm. One of the essential components for the initiation of protein synthesis. Protects formylmethionyl-tRNA from spontaneous hydrolysis and promotes its binding to the 30S ribosomal subunits. Also involved in the hydrolysis of GTP during the formation of the 70S ribosomal complex. The sequence is that of Translation initiation factor IF-2 from Ruegeria sp. (strain TM1040) (Silicibacter sp.).